Here is a 202-residue protein sequence, read N- to C-terminus: Pyridoxal 5'-phosphate synthase subunit PdxT (202 aa).

49–51 (GES) contributes to the L-glutamine binding site. Cys-81 acts as the Nucleophile in catalysis. L-glutamine-binding positions include Arg-110 and 139–140 (IR). Residues His-182 and Glu-184 each act as charge relay system in the active site.

The protein belongs to the glutaminase PdxT/SNO family. In the presence of PdxS, forms a dodecamer of heterodimers. Only shows activity in the heterodimer.

The catalysed reaction is aldehydo-D-ribose 5-phosphate + D-glyceraldehyde 3-phosphate + L-glutamine = pyridoxal 5'-phosphate + L-glutamate + phosphate + 3 H2O + H(+). It catalyses the reaction L-glutamine + H2O = L-glutamate + NH4(+). It functions in the pathway cofactor biosynthesis; pyridoxal 5'-phosphate biosynthesis. In terms of biological role, catalyzes the hydrolysis of glutamine to glutamate and ammonia as part of the biosynthesis of pyridoxal 5'-phosphate. The resulting ammonia molecule is channeled to the active site of PdxS. The protein is Pyridoxal 5'-phosphate synthase subunit PdxT of Rhodococcus jostii (strain RHA1).